Consider the following 407-residue polypeptide: D-mannose isomerase (407 aa).

Residues histidine 251 and histidine 383 each act as proton donor/acceptor in the active site.

It belongs to the N-acylglucosamine 2-epimerase family. In terms of assembly, homodimer.

It carries out the reaction D-mannose = D-fructose. The enzyme catalyses D-lyxose = D-xylulose. With respect to regulation, significantly inhibited by divalent metal ions such as Cu(2+), Cd(2+) or Ca(2+). Its function is as follows. Catalyzes the reversible isomerization of D-mannose to D-fructose. Shows weaker activity on D-lyxose, but cannot use N-acetyl D-glucosamine. The sequence is that of D-mannose isomerase from Thermobifida fusca (Thermomonospora fusca).